The primary structure comprises 481 residues: Velvet complex subunit B (481 aa).

Disordered stretches follow at residues 1–157 (MNSA…YSKI) and 241–339 (GTGA…NGYG). Pro residues-rich tracts occupy residues 36 to 45 (HPPPPLPPPS), 53 to 62 (PPLPPPPSAP), and 96 to 112 (PYAPAPYQQPQPSQYPR). Residues 160 to 464 (GSGWKYSLDV…ANQGIKIPIR (305 aa)) enclose the Velvet domain. 2 stretches are compositionally biased toward low complexity: residues 241–255 (GTGAMASSSTYTYSS) and 293–325 (QQSYGQAPSYPPSSSYGPPQQYYPRHSGYSAEP).

It belongs to the velvet family. VelB subfamily. In terms of assembly, component of the heterotrimeric velvet complex composed of laeA, veA and velB; VeA acting as a bridging protein between laeA and velB. Forms a heterodimeric complex with vosA; the formation of the velB-vosA complex is light-dependent.

The protein resides in the nucleus. It localises to the cytoplasm. Functionally, component of the velvet transcription factor complex that controls sexual/asexual developmental ratio in response to light, promoting sexual development in the darkness while stimulating asexual sporulation under illumination. The velvet complex acts as a global regulator for secondary metabolite gene expression. Component of the velB-VosA heterodimeric complex that plays a dual role in activating genes associated with spore maturation and repressing certain development-associated genes. The velB-VosA complex binds DNA through the DNA-binding domain of vosA that recognizes an 11-nucleotide consensus sequence 5'-CTGGCCGCGGC-3' consisting of two motifs in the promoters of key developmental regulatory genes. Controls the biosynthetic gene cluster for beauvericin, a depsipeptide mycotoxin that functions as a virulence determinant. Also regulates chromatin structure and transcription of siderophore biosynthetic genes and is required for infection of tomato plants. The protein is Velvet complex subunit B of Fusarium oxysporum f. sp. lycopersici (strain 4287 / CBS 123668 / FGSC 9935 / NRRL 34936) (Fusarium vascular wilt of tomato).